An 854-amino-acid chain; its full sequence is Protein ROOT HAIR DEFECTIVE 3 homolog 1 (854 aa).

The Cytoplasmic segment spans residues 1-680; it reads MDEAAAAEAV…QAHKRGNGRL (680 aa). A GB1/RHD3-type G domain is found at 37 to 252; sequence GLSYAVVSIM…IAPGGLAGDR (216 aa). Position 47-54 (47-54) interacts with GTP; the sequence is GPQSSGKS. Residues 217-242 adopt a coiled-coil conformation; it reads ALPSFEEKEEQFREQVQQLRQRFSNS. The chain crosses the membrane as a helical span at residues 681–701; that stretch reads PPPWAMVAIAVLGFNEIMTLL. Over 702–704 the chain is Lumenal; the sequence is RNP. The chain crosses the membrane as a helical span at residues 705–725; the sequence is IYLFLLFVGYLLVKALAVQLD. Topologically, residues 726–854 are cytoplasmic; the sequence is INREFQNGVV…NESNNAYSIV (129 aa). Low complexity-rich tracts occupy residues 758–781 and 814–828; these read TEQQ…QQQP and VSPS…VTSP. Residues 758–854 are disordered; sequence TEQQQQQGHH…NESNNAYSIV (97 aa). Residues 842-854 show a composition bias toward polar residues; sequence QPDNESNNAYSIV.

The protein belongs to the TRAFAC class dynamin-like GTPase superfamily. GB1/RHD3 GTPase family. RHD3 subfamily.

The protein resides in the endoplasmic reticulum membrane. In terms of biological role, probable GTP-binding protein that may be involved in cell development. This chain is Protein ROOT HAIR DEFECTIVE 3 homolog 1, found in Oryza sativa subsp. japonica (Rice).